Here is a 166-residue protein sequence, read N- to C-terminus: Urease accessory protein UreE 2 (166 aa).

A disordered region spans residues Glu135 to Asn154.

It belongs to the UreE family.

Its subcellular location is the cytoplasm. In terms of biological role, involved in urease metallocenter assembly. Binds nickel. Probably functions as a nickel donor during metallocenter assembly. This is Urease accessory protein UreE 2 from Pseudomonas syringae pv. syringae (strain B728a).